The sequence spans 341 residues: Protein phosphatase methylesterase 1 (341 aa).

The segment at 1–24 (MAFRKEELSQTLYENESEQSSETK) is disordered. The segment covering 9 to 20 (SQTLYENESEQS) has biased composition (polar residues). Catalysis depends on residues serine 153, aspartate 178, and histidine 304.

The protein belongs to the AB hydrolase superfamily.

The catalysed reaction is [phosphatase 2A protein]-C-terminal L-leucine methyl ester + H2O = [phosphatase 2A protein]-C-terminal L-leucine + methanol + H(+). In terms of biological role, demethylates proteins that have been reversibly carboxymethylated. Demethylates the phosphatase PP2A catalytic subunit. The chain is Protein phosphatase methylesterase 1 (ppe1) from Schizosaccharomyces pombe (strain 972 / ATCC 24843) (Fission yeast).